The chain runs to 277 residues: MTIRLYKAYTPGTRNRSVLGFKELVKTNPQKKLTFWQHNKQGRNNRGVITSRFRGGGHKRLYRQIDFRRNKKNISGKITTIEYDPNRTANICLVHYEDGEKRYILHPRGLKVGDTIISSNEAPILIGNALPLTNMPLGTAIHNIEITPGKGGQLVKSAGAVAKLIAKEGQLATLRLPSGEVRLVSQNSLATIGQIGNVDANNKTIGKAGAKRWLGKRPRVRGVVMNPIDHPHGGGEGRAPIGREKPLTPWGRTALGKRTRKIKKYSNPLILRRRKNG.

A disordered region spans residues 226-249; that stretch reads NPIDHPHGGGEGRAPIGREKPLTP. The span at 229 to 246 shows a compositional bias: basic and acidic residues; the sequence is DHPHGGGEGRAPIGREKP.

It belongs to the universal ribosomal protein uL2 family. As to quaternary structure, part of the 50S ribosomal subunit.

The protein resides in the plastid. It localises to the chloroplast. The chain is Large ribosomal subunit protein uL2c (rpl2) from Physcomitrium patens (Spreading-leaved earth moss).